Consider the following 545-residue polypeptide: Chaperonin GroEL (545 aa).

ATP contacts are provided by residues 30–33 (TLGP), Lys-51, 87–91 (DGTTT), Gly-415, and Asp-495.

This sequence belongs to the chaperonin (HSP60) family. Forms a cylinder of 14 subunits composed of two heptameric rings stacked back-to-back. Interacts with the co-chaperonin GroES.

The protein localises to the cytoplasm. The catalysed reaction is ATP + H2O + a folded polypeptide = ADP + phosphate + an unfolded polypeptide.. Its function is as follows. Together with its co-chaperonin GroES, plays an essential role in assisting protein folding. The GroEL-GroES system forms a nano-cage that allows encapsulation of the non-native substrate proteins and provides a physical environment optimized to promote and accelerate protein folding. This is Chaperonin GroEL from Shewanella oneidensis (strain ATCC 700550 / JCM 31522 / CIP 106686 / LMG 19005 / NCIMB 14063 / MR-1).